We begin with the raw amino-acid sequence, 323 residues long: Porphobilinogen deaminase (323 aa).

Residue C240 is modified to S-(dipyrrolylmethanemethyl)cysteine.

It belongs to the HMBS family. In terms of assembly, monomer. It depends on dipyrromethane as a cofactor.

The catalysed reaction is 4 porphobilinogen + H2O = hydroxymethylbilane + 4 NH4(+). Its pathway is porphyrin-containing compound metabolism; protoporphyrin-IX biosynthesis; coproporphyrinogen-III from 5-aminolevulinate: step 2/4. In terms of biological role, tetrapolymerization of the monopyrrole PBG into the hydroxymethylbilane pre-uroporphyrinogen in several discrete steps. The polypeptide is Porphobilinogen deaminase (Sulfurovum sp. (strain NBC37-1)).